We begin with the raw amino-acid sequence, 255 residues long: Thiazole synthase (255 aa).

The Schiff-base intermediate with DXP role is filled by Lys-95. 1-deoxy-D-xylulose 5-phosphate is bound by residues Gly-156, 182–183, and 204–205; these read AG and NT.

It belongs to the ThiG family. In terms of assembly, homotetramer. Forms heterodimers with either ThiH or ThiS.

The protein localises to the cytoplasm. The catalysed reaction is [ThiS sulfur-carrier protein]-C-terminal-Gly-aminoethanethioate + 2-iminoacetate + 1-deoxy-D-xylulose 5-phosphate = [ThiS sulfur-carrier protein]-C-terminal Gly-Gly + 2-[(2R,5Z)-2-carboxy-4-methylthiazol-5(2H)-ylidene]ethyl phosphate + 2 H2O + H(+). Its pathway is cofactor biosynthesis; thiamine diphosphate biosynthesis. In terms of biological role, catalyzes the rearrangement of 1-deoxy-D-xylulose 5-phosphate (DXP) to produce the thiazole phosphate moiety of thiamine. Sulfur is provided by the thiocarboxylate moiety of the carrier protein ThiS. In vitro, sulfur can be provided by H(2)S. This is Thiazole synthase from Vibrio parahaemolyticus serotype O3:K6 (strain RIMD 2210633).